Consider the following 103-residue polypeptide: Large ribosomal subunit protein uL24 (103 aa).

This sequence belongs to the universal ribosomal protein uL24 family. In terms of assembly, part of the 50S ribosomal subunit.

One of two assembly initiator proteins, it binds directly to the 5'-end of the 23S rRNA, where it nucleates assembly of the 50S subunit. In terms of biological role, one of the proteins that surrounds the polypeptide exit tunnel on the outside of the subunit. The sequence is that of Large ribosomal subunit protein uL24 from Roseobacter denitrificans (strain ATCC 33942 / OCh 114) (Erythrobacter sp. (strain OCh 114)).